Here is a 173-residue protein sequence, read N- to C-terminus: Nicotinamide-nucleotide adenylyltransferase (173 aa).

It belongs to the archaeal NMN adenylyltransferase family.

It localises to the cytoplasm. The catalysed reaction is beta-nicotinamide D-ribonucleotide + ATP + H(+) = diphosphate + NAD(+). It functions in the pathway cofactor biosynthesis; NAD(+) biosynthesis; NAD(+) from nicotinamide D-ribonucleotide: step 1/1. In Methanosarcina mazei (strain ATCC BAA-159 / DSM 3647 / Goe1 / Go1 / JCM 11833 / OCM 88) (Methanosarcina frisia), this protein is Nicotinamide-nucleotide adenylyltransferase.